The sequence spans 311 residues: Ribosomal RNA small subunit methyltransferase H (311 aa).

Residues 34-36 (GGH), Asp54, Phe78, Asp100, and Gln107 contribute to the S-adenosyl-L-methionine site.

This sequence belongs to the methyltransferase superfamily. RsmH family.

It is found in the cytoplasm. The enzyme catalyses cytidine(1402) in 16S rRNA + S-adenosyl-L-methionine = N(4)-methylcytidine(1402) in 16S rRNA + S-adenosyl-L-homocysteine + H(+). Specifically methylates the N4 position of cytidine in position 1402 (C1402) of 16S rRNA. The sequence is that of Ribosomal RNA small subunit methyltransferase H from Hamiltonella defensa subsp. Acyrthosiphon pisum (strain 5AT).